The sequence spans 265 residues: Flavin-dependent thymidylate synthase (265 aa).

The region spanning 11–224 (GFLKLIDFMG…PIAFNSFENH (214 aa)) is the ThyX domain. Residues Ser-56, 79-81 (RHR), and Glu-87 each bind FAD. 76–79 (QWMR) is a dUMP binding site. The short motif at 79–89 (RHRTARINEVS) is the ThyX motif element. Arg-155 lines the dUMP pocket. FAD is bound by residues 171–173 (DLN) and His-177. Arg-182 serves as a coordination point for dUMP. Catalysis depends on Arg-182, which acts as the Involved in ionization of N3 of dUMP, leading to its activation.

Belongs to the thymidylate synthase ThyX family. In terms of assembly, homotetramer. FAD is required as a cofactor.

The enzyme catalyses dUMP + (6R)-5,10-methylene-5,6,7,8-tetrahydrofolate + NADPH + H(+) = dTMP + (6S)-5,6,7,8-tetrahydrofolate + NADP(+). The protein operates within pyrimidine metabolism; dTTP biosynthesis. Catalyzes the reductive methylation of 2'-deoxyuridine-5'-monophosphate (dUMP) to 2'-deoxythymidine-5'-monophosphate (dTMP) while utilizing 5,10-methylenetetrahydrofolate (mTHF) as the methyl donor, and NADPH and FADH(2) as the reductant. This chain is Flavin-dependent thymidylate synthase, found in Borreliella burgdorferi (strain ATCC 35210 / DSM 4680 / CIP 102532 / B31) (Borrelia burgdorferi).